Here is a 473-residue protein sequence, read N- to C-terminus: Cell division protein FtsP (473 aa).

The tat-type signal signal peptide spans 1–27; it reads MSLSRRQFIQASGLAMCLGALPFAVQA.

Belongs to the FtsP family. Post-translationally, predicted to be exported by the Tat system. The position of the signal peptide cleavage has not been experimentally proven.

Its subcellular location is the periplasm. Cell division protein that is required for growth during stress conditions. May be involved in protecting or stabilizing the divisomal assembly under conditions of stress. The polypeptide is Cell division protein FtsP (Xenorhabdus nematophila (strain ATCC 19061 / DSM 3370 / CCUG 14189 / LMG 1036 / NCIMB 9965 / AN6)).